We begin with the raw amino-acid sequence, 329 residues long: 3-dehydroquinate synthase (329 aa).

This sequence belongs to the archaeal-type DHQ synthase family.

The catalysed reaction is 2-amino-2,3,7-trideoxy-D-lyxo-hept-6-ulosonate + NAD(+) + H2O = 3-dehydroquinate + NH4(+) + NADH + H(+). Catalyzes the oxidative deamination and cyclization of 2-amino-3,7-dideoxy-D-threo-hept-6-ulosonic acid (ADH) to yield 3-dehydroquinate (DHQ), which is fed into the canonical shikimic pathway of aromatic amino acid biosynthesis. The protein is 3-dehydroquinate synthase of Methanoregula boonei (strain DSM 21154 / JCM 14090 / 6A8).